The following is a 740-amino-acid chain: Elongation factor 2 (740 aa).

Residues 23–264 form the tr-type G domain; the sequence is AQIRNAGTLA…MIIEHVPPPN (242 aa). Residues 32 to 39, 98 to 102, and 152 to 155 each bind GTP; these read AHVDHGKT, DTPGH, and NKID. H605 carries the diphthamide modification.

Belongs to the TRAFAC class translation factor GTPase superfamily. Classic translation factor GTPase family. EF-G/EF-2 subfamily.

The protein localises to the cytoplasm. Its function is as follows. Catalyzes the GTP-dependent ribosomal translocation step during translation elongation. During this step, the ribosome changes from the pre-translocational (PRE) to the post-translocational (POST) state as the newly formed A-site-bound peptidyl-tRNA and P-site-bound deacylated tRNA move to the P and E sites, respectively. Catalyzes the coordinated movement of the two tRNA molecules, the mRNA and conformational changes in the ribosome. The polypeptide is Elongation factor 2 (Pyrobaculum islandicum (strain DSM 4184 / JCM 9189 / GEO3)).